The primary structure comprises 100 residues: HssA/B-like protein 37 (100 aa).

Disordered regions lie at residues 1-29 (MTLF…SGTS) and 67-100 (RSRG…CCGI). Gly residues predominate over residues 71–93 (SCGGNRGNGNGNGGMGGGNGSCC).

The protein belongs to the hssA/B family.

The chain is HssA/B-like protein 37 (hssl37) from Dictyostelium discoideum (Social amoeba).